We begin with the raw amino-acid sequence, 408 residues long: Probable ethanolamine permease EutH (408 aa).

11 consecutive transmembrane segments (helical) span residues 1-21 (MGIN…AAVD), 61-81 (AMVG…PVII), 89-109 (ANPS…FFLA), 126-146 (ILGS…LGII), 155-175 (ALGV…GGLI), 192-212 (FALI…VALG), 230-250 (FLVA…LLGW), 274-294 (IEVI…VLLL), 313-333 (NIAA…FGMM), 342-362 (VINC…LGFA), and 369-389 (MIFP…GVAM).

Belongs to the EutH family.

Its subcellular location is the cell inner membrane. The enzyme catalyses ethanolamine(in) = ethanolamine(out). The protein operates within amine and polyamine degradation; ethanolamine degradation. Its function is as follows. Probably involved in the diffusion of protonated ethanolamine (EA) into the cell at low pH. At low pH most EA is protonated, and this permease becomes necessary. Contributes to bacterial survival and replication in acidified macrophage vacuoles, but not to bacterial uptake by macrophages. Expression of the eut operon allows this bacteria to use ethanolamine (EA) as a carbon, nitrogen and energy source. It relies on cobalamin (vitamin B12) both as a cofactor for the ethanolamine ammonia-lyase (EAL) activity and to induce the operon. EA enhances bacterial survival in macrophages in a concentration-dependent manner, suggesting it is an important nutrient during infection. This Salmonella typhimurium (strain LT2 / SGSC1412 / ATCC 700720) protein is Probable ethanolamine permease EutH.